Here is a 157-residue protein sequence, read N- to C-terminus: Deoxyuridine 5'-triphosphate nucleotidohydrolase (157 aa).

Substrate contacts are provided by residues Arg-76–Gly-78, Asn-89, Thr-93–Asp-95, and Lys-103.

The protein belongs to the dUTPase family. Requires Mg(2+) as cofactor.

The enzyme catalyses dUTP + H2O = dUMP + diphosphate + H(+). It participates in pyrimidine metabolism; dUMP biosynthesis; dUMP from dCTP (dUTP route): step 2/2. Its function is as follows. This enzyme is involved in nucleotide metabolism: it produces dUMP, the immediate precursor of thymidine nucleotides and it decreases the intracellular concentration of dUTP so that uracil cannot be incorporated into DNA. This chain is Deoxyuridine 5'-triphosphate nucleotidohydrolase, found in Brucella abortus (strain 2308).